A 317-amino-acid chain; its full sequence is Olfactory receptor 5AP2 (317 aa).

The Extracellular portion of the chain corresponds to 1–32 (MVRSGKGIQNKNATEVTEFILLGLSDNPDLQG). A glycan (N-linked (GlcNAc...) asparagine) is linked at Asn12. A helical transmembrane segment spans residues 33 to 53 (VLFALFLIIYTMTLVGNLGMM). Residues 54 to 61 (ALIKIDRS) lie on the Cytoplasmic side of the membrane. The chain crosses the membrane as a helical span at residues 62–82 (LHTPMYFFLSSLSFVDASYSS). Residues 83-106 (SVTPKMLVNLMAEDKSISFNGCAT) lie on the Extracellular side of the membrane. Cys104 and Cys196 are joined by a disulfide. The chain crosses the membrane as a helical span at residues 107 to 127 (QFFFFGSFLGTECFLLAMMAY). Topologically, residues 128 to 140 (DRYAAIWNPLLYP) are cytoplasmic. The helical transmembrane segment at 141–161 (VLMSGRICFMLVSTSFLAGFG) threads the bilayer. Residues 162-203 (NAAIHTGMTFRLSFCGSNKINHFYCDTPPLLKLSCSDTHING) lie on the Extracellular side of the membrane. The helical transmembrane segment at 204–224 (IVIMAFSSFNVISCVLIVLIS) threads the bilayer. The Cytoplasmic segment spans residues 225–244 (YLCILIAILKMPSAEGRHKA). A helical membrane pass occupies residues 245 to 265 (FSTCASHLMAVTIFFGTILFM). The Extracellular segment spans residues 266 to 278 (YLRPTSSYSMEQD). The chain crosses the membrane as a helical span at residues 279-299 (KVVSVFYTVVIPMLNPLIYSL). Residues 300 to 317 (KNKDVKKAVKKILHNYVV) are Cytoplasmic-facing.

It belongs to the G-protein coupled receptor 1 family.

The protein localises to the cell membrane. Odorant receptor. The sequence is that of Olfactory receptor 5AP2 from Mus musculus (Mouse).